The primary structure comprises 187 residues: Elongation factor P (187 aa).

It belongs to the elongation factor P family.

It is found in the cytoplasm. Its pathway is protein biosynthesis; polypeptide chain elongation. In terms of biological role, involved in peptide bond synthesis. Stimulates efficient translation and peptide-bond synthesis on native or reconstituted 70S ribosomes in vitro. Probably functions indirectly by altering the affinity of the ribosome for aminoacyl-tRNA, thus increasing their reactivity as acceptors for peptidyl transferase. This chain is Elongation factor P, found in Chelativorans sp. (strain BNC1).